The sequence spans 340 residues: tRNA N6-adenosine threonylcarbamoyltransferase (340 aa).

Fe cation-binding residues include His-115 and His-119. Residues Val-138–Gly-142, Asp-171, Gly-184, Asp-188, and Asn-278 contribute to the substrate site. A Fe cation-binding site is contributed by Asp-306.

This sequence belongs to the KAE1 / TsaD family. The cofactor is Fe(2+).

It is found in the cytoplasm. The catalysed reaction is L-threonylcarbamoyladenylate + adenosine(37) in tRNA = N(6)-L-threonylcarbamoyladenosine(37) in tRNA + AMP + H(+). Functionally, required for the formation of a threonylcarbamoyl group on adenosine at position 37 (t(6)A37) in tRNAs that read codons beginning with adenine. Is involved in the transfer of the threonylcarbamoyl moiety of threonylcarbamoyl-AMP (TC-AMP) to the N6 group of A37, together with TsaE and TsaB. TsaD likely plays a direct catalytic role in this reaction. The protein is tRNA N6-adenosine threonylcarbamoyltransferase of Clostridium botulinum (strain Kyoto / Type A2).